The primary structure comprises 125 residues: L-fucose mutarotase (125 aa).

Residue H13 is the Proton donor of the active site.

This sequence belongs to the RbsD / FucU family. FucU mutarotase subfamily.

It carries out the reaction alpha-L-fucose = beta-L-fucose. Its activity is regulated as follows. Active toward L-galactopyranoside and D-arabinopyranoside but no D-fucopyranoside activity detected. In terms of biological role, plays a role in the catabolism of L-fucose. Involved in the anomeric conversion of L-fucose. In Xanthomonas campestris pv. campestris (strain ATCC 33913 / DSM 3586 / NCPPB 528 / LMG 568 / P 25), this protein is L-fucose mutarotase.